Consider the following 216-residue polypeptide: Small ribosomal subunit protein uS3c (216 aa).

The KH type-2 domain occupies 43–115 (FENDWGTLYN…QTRIKVIQVN (73 aa)).

The protein belongs to the universal ribosomal protein uS3 family. As to quaternary structure, part of the 30S ribosomal subunit.

Its subcellular location is the plastid. The protein resides in the chloroplast. The polypeptide is Small ribosomal subunit protein uS3c (rps3) (Emiliania huxleyi (Coccolithophore)).